A 457-amino-acid polypeptide reads, in one-letter code: 6-phosphofructo-2-kinase/fructose-2,6-bisphosphatase (457 aa).

Residues 1–20 are disordered; it reads MEIPPGLETTKRKVAHSDEH. Residues 1–244 are 6-phosphofructo-2-kinase; the sequence is MEIPPGLETT…VYFLMNIHLL (244 aa). Basic and acidic residues predominate over residues 9 to 20; it reads TTKRKVAHSDEH. 36–44 is a binding site for ATP; it reads GLPARGKTY. 2 residues coordinate beta-D-fructose 6-phosphate: Arg69 and Arg98. The active site involves Asp124. Beta-D-fructose 6-phosphate-binding residues include Thr126 and Arg132. Residue Cys154 is part of the active site. 163–168 serves as a coordination point for ATP; that stretch reads NVTDVK. Lys168, Arg190, and Tyr194 together coordinate beta-D-fructose 6-phosphate. Residues 245 to 457 form a fructose-2,6-bisphosphatase region; it reads PRSIYLTRHG…QLPLCDSPRD (213 aa). Arg252 lines the beta-D-fructose 2,6-bisphosphate pocket. Catalysis depends on His253, which acts as the Tele-phosphohistidine intermediate. Beta-D-fructose 2,6-bisphosphate contacts are provided by Asn259 and Gly265. Glu324 (proton donor/acceptor) is an active-site residue. Tyr335, Arg349, Lys353, Tyr364, Gln390, and Arg394 together coordinate beta-D-fructose 2,6-bisphosphate. Residue 346–349 participates in ATP binding; that stretch reads ADDR. ATP contacts are provided by residues 390-394 and Tyr426; that span reads QAVLR.

It in the C-terminal section; belongs to the phosphoglycerate mutase family.

The enzyme catalyses beta-D-fructose 2,6-bisphosphate + H2O = beta-D-fructose 6-phosphate + phosphate. The catalysed reaction is beta-D-fructose 6-phosphate + ATP = beta-D-fructose 2,6-bisphosphate + ADP + H(+). Functionally, synthesis and degradation of fructose 2,6-bisphosphate. This chain is 6-phosphofructo-2-kinase/fructose-2,6-bisphosphatase, found in Caenorhabditis elegans.